The chain runs to 328 residues: Cell division protein ZipA (328 aa).

The Periplasmic portion of the chain corresponds to Met-1 to Asn-4. Residues Thr-5 to Ser-25 form a helical membrane-spanning segment. Residues Asn-26–Val-328 are Cytoplasmic-facing. A disordered region spans residues Ser-44–Leu-82. Over residues Gln-57–Val-67 the composition is skewed to polar residues.

The protein belongs to the ZipA family. As to quaternary structure, interacts with FtsZ via their C-terminal domains.

Its subcellular location is the cell inner membrane. In terms of biological role, essential cell division protein that stabilizes the FtsZ protofilaments by cross-linking them and that serves as a cytoplasmic membrane anchor for the Z ring. Also required for the recruitment to the septal ring of downstream cell division proteins. This is Cell division protein ZipA from Haemophilus influenzae (strain ATCC 51907 / DSM 11121 / KW20 / Rd).